We begin with the raw amino-acid sequence, 740 residues long: Catalase-peroxidase (740 aa).

Positions 1–27 (MFKSTLPIAAAISVALTSMVLPAKALA) are cleaved as a signal peptide. A cross-link (tryptophyl-tyrosyl-methioninium (Trp-Tyr) (with M-254)) is located at residues 106-228 (WHSAGVYRVH…LAAVEMGLIY (123 aa)). The Proton acceptor role is filled by histidine 107. Residues 228-254 (YVNPEGPHGKPDPLLAANDIRMSFGRM) constitute a cross-link (tryptophyl-tyrosyl-methioninium (Tyr-Met) (with W-106)). Residue histidine 269 participates in heme b binding.

Belongs to the peroxidase family. Peroxidase/catalase subfamily. Homodimer or homotetramer. It depends on heme b as a cofactor. Formation of the three residue Trp-Tyr-Met cross-link is important for the catalase, but not the peroxidase activity of the enzyme.

It catalyses the reaction H2O2 + AH2 = A + 2 H2O. It carries out the reaction 2 H2O2 = O2 + 2 H2O. Its function is as follows. Bifunctional enzyme with both catalase and broad-spectrum peroxidase activity. This is Catalase-peroxidase from Colwellia psychrerythraea (strain 34H / ATCC BAA-681) (Vibrio psychroerythus).